We begin with the raw amino-acid sequence, 135 residues long: Large ribosomal subunit protein uL16c (135 aa).

This sequence belongs to the universal ribosomal protein uL16 family. As to quaternary structure, part of the 50S ribosomal subunit.

It is found in the plastid. The protein is Large ribosomal subunit protein uL16c of Epifagus virginiana (Beechdrops).